The chain runs to 307 residues: Acetaldehyde dehydrogenase 2 (307 aa).

Residue 13–16 (SGNI) participates in NAD(+) binding. The Acyl-thioester intermediate role is filled by Cys132. NAD(+) is bound by residues 163 to 171 (SIGPGTRAN) and Asn274.

The protein belongs to the acetaldehyde dehydrogenase family.

The catalysed reaction is acetaldehyde + NAD(+) + CoA = acetyl-CoA + NADH + H(+). This is Acetaldehyde dehydrogenase 2 from Methylibium petroleiphilum (strain ATCC BAA-1232 / LMG 22953 / PM1).